A 422-amino-acid chain; its full sequence is Keratin, type I cytoskeletal 23 (422 aa).

Positions 1–13 are enriched in polar residues; sequence MNSGHSFSQTPSA. The tract at residues 1–71 is head; that stretch reads MNSGHSFSQT…GRSSPLLGGN (71 aa). The segment at 1–73 is disordered; sequence MNSGHSFSQT…SSPLLGGNGK (73 aa). Residues 72–107 form a coil 1A region; the sequence is GKATMQNLNDRLASYLEKVRALEEANMKLESRILKW. Residues 72–382 form the IF rod domain; the sequence is GKATMQNLND…RLLEGESEGT (311 aa). The tract at residues 108 to 125 is linker 1; sequence HQQRDPGSKKDYSQYEEN. The interval 126–217 is coil 1B; that stretch reads ITHLQEQIVD…KHHEQEMEKH (92 aa). The interval 218–240 is linker 12; it reads HVPSDFNVNVKVDTGPREDLIKV. The tract at residues 241-378 is coil 2; that stretch reads LEDMRQEYEL…TTYRRLLEGE (138 aa). Positions 379–422 are rod-like helical tail; sequence SEGTREESKSSMKVSATPKIKAITQETINGRLVLCQVNEIQKHA.

It belongs to the intermediate filament family. As to quaternary structure, heterotetramer of two type I and two type II keratins.

The polypeptide is Keratin, type I cytoskeletal 23 (KRT23) (Homo sapiens (Human)).